A 171-amino-acid polypeptide reads, in one-letter code: Ribosome maturation factor RimP (171 aa).

It belongs to the RimP family.

It is found in the cytoplasm. Functionally, required for maturation of 30S ribosomal subunits. In Anaeromyxobacter dehalogenans (strain 2CP-C), this protein is Ribosome maturation factor RimP.